The chain runs to 358 residues: Putative KilA-N domain-containing protein 313L (358 aa).

The 110-residue stretch at 15–124 folds into the KilA-N domain; it reads NFYYGLFGDF…DKCNQIVIDF (110 aa). Positions 126–245 form a coiled coil; the sequence is VVEFKEKEKE…VKLEISVEDR (120 aa).

It belongs to the IIV-6 006L/238R/313L/468L family.

The polypeptide is Putative KilA-N domain-containing protein 313L (Acheta domesticus (House cricket)).